A 268-amino-acid polypeptide reads, in one-letter code: Nickel import ATP-binding protein NikE (268 aa).

One can recognise an ABC transporter domain in the interval 4–252; it reads LNVSDLSHHY…SSDAGRVLQN (249 aa). Residue 45-52 participates in ATP binding; that stretch reads GRSGCGKS.

It belongs to the ABC transporter superfamily. Nickel importer (TC 3.A.1.5.3) family. As to quaternary structure, the complex is composed of two ATP-binding proteins (NikD and NikE), two transmembrane proteins (NikB and NikC) and a solute-binding protein (NikA).

The protein localises to the cell inner membrane. The catalysed reaction is Ni(2+)(out) + ATP + H2O = Ni(2+)(in) + ADP + phosphate + H(+). In terms of biological role, part of the ABC transporter complex NikABCDE involved in nickel import. Responsible for energy coupling to the transport system. The polypeptide is Nickel import ATP-binding protein NikE (Shigella dysenteriae serotype 1 (strain Sd197)).